Consider the following 210-residue polypeptide: Large ribosomal subunit protein bL9 (210 aa).

The disordered stretch occupies residues 172-210 (EAAAAALEPDSEEEFEAATPPSELAAEASDEDADDAKEA). The segment covering 199–210 (ASDEDADDAKEA) has biased composition (acidic residues).

The protein belongs to the bacterial ribosomal protein bL9 family.

In terms of biological role, binds to the 23S rRNA. In Sphingopyxis alaskensis (strain DSM 13593 / LMG 18877 / RB2256) (Sphingomonas alaskensis), this protein is Large ribosomal subunit protein bL9.